We begin with the raw amino-acid sequence, 427 residues long: UDP-N-acetylglucosamine--N-acetylmuramyl-(pentapeptide) pyrophosphoryl-undecaprenol N-acetylglucosamine transferase (427 aa).

Residues 29–31 (TGG), asparagine 141, arginine 177, serine 205, isoleucine 258, and glutamine 303 contribute to the UDP-N-acetyl-alpha-D-glucosamine site. Residues 408-427 (SLHPIPDSRFPIRTSAGGAQ) form a disordered region.

This sequence belongs to the glycosyltransferase 28 family. MurG subfamily.

It is found in the cell inner membrane. It catalyses the reaction di-trans,octa-cis-undecaprenyl diphospho-N-acetyl-alpha-D-muramoyl-L-alanyl-D-glutamyl-meso-2,6-diaminopimeloyl-D-alanyl-D-alanine + UDP-N-acetyl-alpha-D-glucosamine = di-trans,octa-cis-undecaprenyl diphospho-[N-acetyl-alpha-D-glucosaminyl-(1-&gt;4)]-N-acetyl-alpha-D-muramoyl-L-alanyl-D-glutamyl-meso-2,6-diaminopimeloyl-D-alanyl-D-alanine + UDP + H(+). It participates in cell wall biogenesis; peptidoglycan biosynthesis. Its function is as follows. Cell wall formation. Catalyzes the transfer of a GlcNAc subunit on undecaprenyl-pyrophosphoryl-MurNAc-pentapeptide (lipid intermediate I) to form undecaprenyl-pyrophosphoryl-MurNAc-(pentapeptide)GlcNAc (lipid intermediate II). The chain is UDP-N-acetylglucosamine--N-acetylmuramyl-(pentapeptide) pyrophosphoryl-undecaprenol N-acetylglucosamine transferase from Xanthomonas campestris pv. campestris (strain B100).